A 944-amino-acid chain; its full sequence is Translation initiation factor IF-2 (944 aa).

Residues 61-281 (IQANQPAKNP…TAKNNKSHKI (221 aa)) are disordered. A compositionally biased stretch (polar residues) spans 132–150 (TFENQTPPTENTPKVVSHS). The segment covering 151 to 169 (QIEKAKQKLQEIQKSREAL) has biased composition (basic and acidic residues). Residues 175–185 (SNANNASNTNN) show a composition bias toward low complexity. Residues 186–203 (AKKEISEVKKQEQEIKRH) show a composition bias toward basic and acidic residues. Residues 204-215 (ENIKRRTGFRVI) show a composition bias toward basic residues. Positions 244–259 (EDIKKEWQEKDKQEAK) are enriched in basic and acidic residues. A tr-type G domain is found at 443–612 (ERPPVVTIMG…LIQADIMELK (170 aa)). The segment at 452–459 (GHVDHGKT) is G1. Residue 452–459 (GHVDHGKT) participates in GTP binding. The interval 477–481 (GITQH) is G2. The interval 498–501 (DTPG) is G3. GTP is bound by residues 498-502 (DTPGH) and 552-555 (NKMD). Residues 552–555 (NKMD) are G4. The G5 stretch occupies residues 588–590 (SAK).

The protein belongs to the TRAFAC class translation factor GTPase superfamily. Classic translation factor GTPase family. IF-2 subfamily.

It is found in the cytoplasm. Functionally, one of the essential components for the initiation of protein synthesis. Protects formylmethionyl-tRNA from spontaneous hydrolysis and promotes its binding to the 30S ribosomal subunits. Also involved in the hydrolysis of GTP during the formation of the 70S ribosomal complex. The protein is Translation initiation factor IF-2 of Helicobacter pylori (strain HPAG1).